The chain runs to 333 residues: Regulator of rDNA transcription protein 5 (333 aa).

The segment at 1 to 22 is disordered; that stretch reads MFERQSNNPEPIEVSDNNPERE. Residues 31–114 enclose the RRM 1 domain; it reads TRIYISNLDY…RNLKVKLYVP (84 aa). Disordered regions lie at residues 123–185 and 281–333; these read PAPK…DTVY and GIAE…SVVA. The span at 125-137 shows a compositional bias: basic residues; the sequence is PKPRRLSKLRRSK. Composition is skewed to polar residues over residues 145 to 160 and 169 to 182; these read NAASQDPTVEATQERG and AANNAKQAKPTSDD. In terms of domain architecture, RRM 2 spans 182–267; sequence DTVYCGYLPK…KKISVKPAYI (86 aa). The segment covering 298-308 has biased composition (gly residues); it reads GNGGQPAGPGV. Polar residues predominate over residues 313-327; that stretch reads SNPQQNCDNSNNVQP.

Belongs to the RRT5 family.

May be involved in the modulation of rDNA transcription. The chain is Regulator of rDNA transcription protein 5 (RRT5) from Vanderwaltozyma polyspora (strain ATCC 22028 / DSM 70294 / BCRC 21397 / CBS 2163 / NBRC 10782 / NRRL Y-8283 / UCD 57-17) (Kluyveromyces polysporus).